Here is a 108-residue protein sequence, read N- to C-terminus: Large ribosomal subunit protein uL24 (108 aa).

Belongs to the universal ribosomal protein uL24 family. In terms of assembly, part of the 50S ribosomal subunit.

In terms of biological role, one of two assembly initiator proteins, it binds directly to the 5'-end of the 23S rRNA, where it nucleates assembly of the 50S subunit. Functionally, one of the proteins that surrounds the polypeptide exit tunnel on the outside of the subunit. This is Large ribosomal subunit protein uL24 from Pelobacter propionicus (strain DSM 2379 / NBRC 103807 / OttBd1).